The primary structure comprises 86 residues: Serine protease inhibitor Kazal-type 9 (86 aa).

The signal sequence occupies residues M1–S19. The region spanning T26–C86 is the Kazal-like domain. Disulfide bonds link C32–C68, C46–C65, and C54–C86.

As to quaternary structure, dimer. Interacts with KLK5 and KLK8. In terms of tissue distribution, skin. Highly expressed at sites of hyperkeratosis. Also detected in thymus, tonsils, testis, pancreas, liver, placenta and brain. Expressed at stratum granulosum and stratum corneum at palmar and plantar sites (at protein level).

It localises to the secreted. In terms of biological role, serine protease inhibitor which specifically inhibits KLK5. May contribute to the regulation of the desquamation process in skin by inhibiting KLK5. This is Serine protease inhibitor Kazal-type 9 (SPINK9) from Homo sapiens (Human).